Here is a 43-residue protein sequence, read N- to C-terminus: Bacteriocin mundticin (43 aa).

Cysteines 9 and 14 form a disulfide.

Functionally, this bacteriocin inhibits the growth of several Gram-positive bacteria, especially pathogenic L.monocytogenes and C.botulinum but has no effect on the growth of a number of yeasts and Gram-negative bacteria. The chain is Bacteriocin mundticin from Enterococcus mundtii.